The sequence spans 626 residues: Chaperone protein HtpG (626 aa).

Residues 1–341 (MAKREFKAES…SEDLSLNISR (341 aa)) are a; substrate-binding. Positions 342–552 (EMLQHDRQLK…DGEVTIEMEK (211 aa)) are b. The c stretch occupies residues 553–626 (ILNAMPDNQH…FTNDICKVMA (74 aa)).

The protein belongs to the heat shock protein 90 family. As to quaternary structure, homodimer.

The protein localises to the cytoplasm. Molecular chaperone. Has ATPase activity. The sequence is that of Chaperone protein HtpG from Bacillus licheniformis (strain ATCC 14580 / DSM 13 / JCM 2505 / CCUG 7422 / NBRC 12200 / NCIMB 9375 / NCTC 10341 / NRRL NRS-1264 / Gibson 46).